Here is a 447-residue protein sequence, read N- to C-terminus: Xylose isomerase (447 aa).

Catalysis depends on residues histidine 102 and aspartate 105. Mg(2+) is bound by residues glutamate 233, glutamate 269, histidine 272, aspartate 297, aspartate 308, aspartate 310, and aspartate 340.

The protein belongs to the xylose isomerase family. Homotetramer. Mg(2+) serves as cofactor.

The protein localises to the cytoplasm. The catalysed reaction is alpha-D-xylose = alpha-D-xylulofuranose. The protein is Xylose isomerase of Pediococcus pentosaceus (strain ATCC 25745 / CCUG 21536 / LMG 10740 / 183-1w).